A 388-amino-acid chain; its full sequence is LL-diaminopimelate aminotransferase (388 aa).

Residues Tyr-13, Gly-38, Lys-102, Tyr-126, and Asn-176 each contribute to the substrate site. Pyridoxal 5'-phosphate-binding positions include 101-102 (SK), Tyr-126, Asn-176, Tyr-207, and 235-237 (SLS). Position 238 is an N6-(pyridoxal phosphate)lysine (Lys-238). Arg-246 lines the pyridoxal 5'-phosphate pocket. Arg-364 contacts substrate.

Belongs to the class-I pyridoxal-phosphate-dependent aminotransferase family. LL-diaminopimelate aminotransferase subfamily. In terms of assembly, homodimer. Pyridoxal 5'-phosphate serves as cofactor.

It catalyses the reaction (2S,6S)-2,6-diaminopimelate + 2-oxoglutarate = (S)-2,3,4,5-tetrahydrodipicolinate + L-glutamate + H2O + H(+). It participates in amino-acid biosynthesis; L-lysine biosynthesis via DAP pathway; LL-2,6-diaminopimelate from (S)-tetrahydrodipicolinate (aminotransferase route): step 1/1. Functionally, involved in the synthesis of meso-diaminopimelate (m-DAP or DL-DAP), required for both lysine and peptidoglycan biosynthesis. Catalyzes the direct conversion of tetrahydrodipicolinate to LL-diaminopimelate. In Dehalococcoides mccartyi (strain ATCC BAA-2266 / KCTC 15142 / 195) (Dehalococcoides ethenogenes (strain 195)), this protein is LL-diaminopimelate aminotransferase.